A 384-amino-acid chain; its full sequence is Methyl-CpG-binding domain-containing protein 10 (384 aa).

An MBD domain is found at 4-74 (TDELVSIELP…SEFEWTTGET (71 aa)). A disordered region spans residues 65-384 (SEFEWTTGET…QQGAAASVSC (320 aa)). Polar residues predominate over residues 80–91 (RISQKVKATTPT). The stretch at 100 to 224 (KRRSSLTKKD…MEVDTSELEK (125 aa)) forms a coiled coil. 3 stretches are compositionally biased toward basic and acidic residues: residues 106–227 (TKKD…KKAG), 234–250 (EPSK…KEAQ), and 257–269 (DVEK…KTEN). The span at 270–284 (KGSVTTEANGEQNVT) shows a compositional bias: polar residues. Residues 295–365 (EADKGKESKE…NDMKAEDTNR (71 aa)) show a composition bias toward basic and acidic residues. A coiled-coil region spans residues 310–356 (TEAEANKENDTQESDEKKTEAAANKENETQESDVKKTEAAVAEEKSN). Position 323 is a phosphoserine (serine 323). The span at 369 to 384 (ANQVQQQQGAAASVSC) shows a compositional bias: low complexity.

As to expression, expressed in leaves, buds, flowers, stems and siliques.

Its subcellular location is the nucleus. Its function is as follows. Probable transcriptional regulator. Required for nucleolar dominance that consist in the silencing of rRNA genes inherited from one progenitor in genetic hybrids. This is Methyl-CpG-binding domain-containing protein 10 (MBD10) from Arabidopsis thaliana (Mouse-ear cress).